A 593-amino-acid polypeptide reads, in one-letter code: Cysteine/serine-rich nuclear protein 1 (593 aa).

3 disordered regions span residues 1–66, 313–392, and 478–497; these read MTGL…RDFC, FREL…GVDD, and REGSLPGTSVPPSMDAGQSS. Composition is skewed to low complexity over residues 17–46 and 351–372; these read SSVSSSSSSSSSSSGCQSLSCSPSSSVSRA and SCSSDMTDSSTASSSASGTSGA.

This sequence belongs to the AXUD1 family.

Its subcellular location is the nucleus. Its function is as follows. Binds to the consensus sequence 5'-AGAGTG-3' and has transcriptional activator activity. May have a tumor-suppressor function. May play a role in apoptosis. In Pongo abelii (Sumatran orangutan), this protein is Cysteine/serine-rich nuclear protein 1 (CSRNP1).